The chain runs to 199 residues: CASP-like protein 4C1 (199 aa).

The Cytoplasmic segment spans residues 1 to 35 (MESGSVANDSGPLNSTPDVHLYGKTAAMKQRRSNT). The helical transmembrane segment at 36-56 (MLFVFRLLTFSFSLAAVLVMG) threads the bilayer. Over 57–80 (TNKQKIRSAPQYLEVAWHDFDPFR) the chain is Extracellular. A helical membrane pass occupies residues 81-101 (YVFAVNAIICVYSFVETWLAV). Residues 102–124 (YTLSRGTLLLPETFQVWFDYGHD) are Cytoplasmic-facing. A helical membrane pass occupies residues 125-145 (QGFACLLFSANSVGIAMAQLL). The Extracellular segment spans residues 146 to 169 (QSGSTLIQGQYYCSDAGAYCTQAR). A helical transmembrane segment spans residues 170–190 (VSIAMGFGAFLFLALSSFLTG). The Cytoplasmic portion of the chain corresponds to 191 to 199 (LRVARWYLP).

The protein belongs to the Casparian strip membrane proteins (CASP) family. As to quaternary structure, homodimer and heterodimers.

Its subcellular location is the cell membrane. This Physcomitrium patens (Spreading-leaved earth moss) protein is CASP-like protein 4C1.